The primary structure comprises 881 residues: NACHT, LRR and PYD domains-containing protein 6 (881 aa).

The 129-residue stretch at 1–129 (MDAAGASCSS…EHVLRQHAKV (129 aa)) folds into the Pyrin domain. Ser-104 bears the Phosphoserine mark. The tract at residues 154 to 175 (AGEDELLGTSGEPEPERARRSD) is disordered. The region spanning 194-510 (LTVVLQGPAG…EFLAALSYLL (317 aa)) is the NACHT domain. Position 200–207 (200–207 (GPAGIGKT)) interacts with ATP. An LRR 1 repeat occupies 459–484 (EKDLERLKLQGSQVQTMFLSKKELPG). The segment at 579 to 611 (QSQPKVATVGAEKKDELKDEEAEEEEEEEEEEE) is disordered. Residues 596–611 (KDEEAEEEEEEEEEEE) show a composition bias toward acidic residues. 3 LRR repeats span residues 637 to 660 (LSSLPEMVLERVRLTRMDLEVLSY), 749 to 772 (APSLRELGLLQNRLTEAGLRLLSQ), and 839 to 863 (TLSLTSVELTENPLRELQAVKTLKP).

This sequence belongs to the NLRP family. Homomultimer; forms the NLRP6 inflammasome polymeric complex, a filament composed of homopolymers in response to pathogens and other damage-associated signals. The core of NLRP6 inflammasomes consists of a signal sensor component (NLRP6), an adapter (PYCARD/ASC), which recruits effector pro-inflammatory caspases (CASP1 and CASP4). Interacts (via pyrin domain) with PYCARD/ASC (via pyrin domain); interaction takes place following NLRP6 activation and formation of liquid-liquid phase separation (LLPS), initiating nucleation which greatly enhances further addition of soluble PYCARD/ASC molecules to the speck in a prion-like polymerization process. Clustered PYCARD/ASC nucleates the formation of CASP1 (or possibly CASP4) filaments through the interaction of their respective CARD domains, acting as a platform for CASP1 polymerization. CASP1 filament formation increases local enzyme concentration, resulting in trans-autocleavage and activation. Active CASP1 then processes IL1B and IL18 precursors, leading to the release of mature cytokines in the extracellular milieu and inflammatory response. Interacts with DHX15. In terms of processing, polyubiquitinated with 'Lys-63'-linked chains, promoting the interaction with PYCARD/ASC and formation of the NLRP6 inflammasome. Deubiquitination by CYLD decreases the interaction with PYCARD/ASC. In terms of tissue distribution, detected in several tissues. Expressed in renal epithelial cells in medullary thick ascending limb of Henle, as well as in salivary gland apical epithelium (at protein level). Isoform 1 is widely expressed. Isoform 2 is primarily expressed in kidney (at protein level).

It localises to the cytoplasm. It is found in the inflammasome. Its subcellular location is the cell membrane. The protein resides in the nucleus membrane. Functionally, acts as the sensor component of the NLRP6 inflammasome, which mediates inflammasome activation in response to various pathogen-associated signals, leading to maturation and secretion of IL1B and IL18. Inflammasomes are supramolecular complexes that assemble in the cytosol in response to pathogens and other damage-associated signals and play critical roles in innate immunity and inflammation. Acts as a recognition receptor (PRR): recognizes and binds specific pathogens and other damage-associated signals, such as lipoteichoic acid (LTA), a cell-wall component of Gram-positive bacteria, or double stranded RNA (dsRNA). May also recognize and bind lipopolysaccharide (LPS), a major component of the outer membrane of Gram-negative bacteria; however, LPS is probably not a major activator of the NLRP6 inflammasome. Following LTA- or dsRNA-binding, NLRP6 undergoes liquid-liquid phase separation (LLPS), enhancing multivalent interactions, an essential step for the formation of the NLRP6 inflammasome polymeric complex. The NLRP6 inflammasome acts by promoting recruitment of effector pro-inflammatory caspases (CASP1 and/or CASP4) that catalyze maturation and secretion of IL1B and IL18 in the extracellular milieu. The NLRP6 inflammasome plays a central role in the maintenance of epithelial integrity and host defense against microbial infections in the intestine. Required to restrict infection against Gram-positive bacteria by recognizing lipoteichoic acid (LTA), leading to recruitment of CASP4 and CASP1, and subsequent maturation and secretion of IL1B and IL18. Involved in intestinal antiviral innate immunity together with DHX15: recognizes and binds viral dsRNA to restrict infection by enteric viruses through the interferon pathway and GSDMD-dependent release of IL18. Required to prevent infection by the apicomplexan parasite Cryptosporidium in enterocytes by promoting GSDMD-dependent release of IL18. The NLRP6 inflammasome may also regulate the gut microbiota composition by acting as a sensor of microbiota-associated metabolites to form a PYCARD/ASC-dependent inflammasome for downstream IL18 release and secretion of antimicrobial peptides. Essential for gut mucosal self-renewal and proliferation. Regulate mucus secretion in an inflammasome- and autophagy-dependent manner to prevent invasion by enteric bacteria,. During systemic bacterial infections, the NLRP6 inflammasome negatively regulates neutrophil recruitment and neutrophil extracellular traps (NETs) formation. May promote peripheral nerve recovery following injury via an inflammasome-independent mechanism. In Rattus norvegicus (Rat), this protein is NACHT, LRR and PYD domains-containing protein 6.